The primary structure comprises 341 residues: S-adenosylmethionine:tRNA ribosyltransferase-isomerase (341 aa).

Belongs to the QueA family. In terms of assembly, monomer.

The protein resides in the cytoplasm. It carries out the reaction 7-aminomethyl-7-carbaguanosine(34) in tRNA + S-adenosyl-L-methionine = epoxyqueuosine(34) in tRNA + adenine + L-methionine + 2 H(+). The protein operates within tRNA modification; tRNA-queuosine biosynthesis. Functionally, transfers and isomerizes the ribose moiety from AdoMet to the 7-aminomethyl group of 7-deazaguanine (preQ1-tRNA) to give epoxyqueuosine (oQ-tRNA). The sequence is that of S-adenosylmethionine:tRNA ribosyltransferase-isomerase from Staphylococcus aureus (strain Mu3 / ATCC 700698).